Reading from the N-terminus, the 562-residue chain is Nucleoprotein (562 aa).

The binding site for the cap structure m7GTP stretch occupies residues 53–238 (MRRERRDDND…ITQEESQINI (186 aa)). The Mn(2+) site is built by Asp381 and Glu383. Zn(2+) is bound by residues Glu391, Cys498, His501, and Cys522. Position 526 (Asp526) interacts with Mn(2+).

The protein belongs to the arenaviridae nucleocapsid protein family. In terms of assembly, homomultimerizes to form the nucleocapsid. Binds to viral genomic RNA. Interacts with glycoprotein G2. Interacts with protein Z; this interaction probably directs the encapsidated genome to budding sites. Interacts with protein L; this interaction does not interfere with Z-L interaction. Interacts with host IKBKE (via Protein kinase domain); the interaction inhibits IKBKE kinase activity.

It localises to the virion. The protein resides in the host cytoplasm. Encapsidates the genome, protecting it from nucleases. The encapsidated genomic RNA is termed the nucleocapsid (NC). Serves as template for viral transcription and replication. The increased presence of protein N in host cell does not seem to trigger the switch from transcription to replication as observed in other negative strain RNA viruses. Through the interaction with host IKBKE, strongly inhibits the phosphorylation and nuclear translocation of host IRF3, a protein involved in interferon activation pathway, leading to the inhibition of interferon-beta and IRF3-dependent promoters activation. Also encodes a functional 3'-5' exoribonuclease that degrades preferentially dsRNA substrates and thereby participates in the suppression of interferon induction. In Tamiami mammarenavirus (isolate Rat/United States/W 10777/1964) (TAMV), this protein is Nucleoprotein.